A 324-amino-acid polypeptide reads, in one-letter code: Glycerol-3-phosphate dehydrogenase [NAD(P)+] (324 aa).

3 residues coordinate NADPH: Trp-15, Arg-35, and Lys-101. 2 residues coordinate sn-glycerol 3-phosphate: Lys-101 and Gly-129. Ala-133 serves as a coordination point for NADPH. Sn-glycerol 3-phosphate-binding residues include Lys-184, Asp-237, Ser-247, Arg-248, and Asn-249. Lys-184 serves as the catalytic Proton acceptor. Arg-248 is an NADPH binding site. Val-272 and Glu-274 together coordinate NADPH.

It belongs to the NAD-dependent glycerol-3-phosphate dehydrogenase family.

The protein localises to the cytoplasm. It carries out the reaction sn-glycerol 3-phosphate + NAD(+) = dihydroxyacetone phosphate + NADH + H(+). The catalysed reaction is sn-glycerol 3-phosphate + NADP(+) = dihydroxyacetone phosphate + NADPH + H(+). It functions in the pathway membrane lipid metabolism; glycerophospholipid metabolism. Catalyzes the reduction of the glycolytic intermediate dihydroxyacetone phosphate (DHAP) to sn-glycerol 3-phosphate (G3P), the key precursor for phospholipid synthesis. This Gluconobacter oxydans (strain 621H) (Gluconobacter suboxydans) protein is Glycerol-3-phosphate dehydrogenase [NAD(P)+].